Consider the following 315-residue polypeptide: ATP synthase gamma chain (315 aa).

This sequence belongs to the ATPase gamma chain family. As to quaternary structure, F-type ATPases have 2 components, CF(1) - the catalytic core - and CF(0) - the membrane proton channel. CF(1) has five subunits: alpha(3), beta(3), gamma(1), delta(1), epsilon(1). CF(0) has three main subunits: a, b and c.

The protein localises to the cellular thylakoid membrane. Functionally, produces ATP from ADP in the presence of a proton gradient across the membrane. The gamma chain is believed to be important in regulating ATPase activity and the flow of protons through the CF(0) complex. This is ATP synthase gamma chain from Microcystis aeruginosa (strain NIES-843 / IAM M-2473).